The sequence spans 635 residues: ATP-dependent zinc metalloprotease FtsH (635 aa).

The Cytoplasmic portion of the chain corresponds to 1–6; it reads MNNQGR. Residues 7 to 27 traverse the membrane as a helical segment; that stretch reads SILTWAALFVFVILLFNVFQS. Topologically, residues 28 to 103 are periplasmic; that stretch reads DGLLGGRNNI…VVPLETRMNT (76 aa). The helical transmembrane segment at 104–124 threads the bilayer; the sequence is FLGFLISWFPMLLLIGVWVFF. Topologically, residues 125–635 are cytoplasmic; it reads MRQMHGGGKA…KKAKKESTNI (511 aa). 195–202 serves as a coordination point for ATP; the sequence is GPPGTGKT. H417 contributes to the Zn(2+) binding site. E418 is a catalytic residue. Residues H421 and D495 each contribute to the Zn(2+) site. A disordered region spans residues 600–635; that stretch reads SEEENKFPFNDSPTIKIDKEKSPEKAKKAKKESTNI. Residues 615 to 635 show a composition bias toward basic and acidic residues; that stretch reads KIDKEKSPEKAKKAKKESTNI.

The protein in the central section; belongs to the AAA ATPase family. This sequence in the C-terminal section; belongs to the peptidase M41 family. In terms of assembly, homohexamer. The cofactor is Zn(2+).

The protein localises to the cell inner membrane. Functionally, acts as a processive, ATP-dependent zinc metallopeptidase for both cytoplasmic and membrane proteins. Plays a role in the quality control of integral membrane proteins. This chain is ATP-dependent zinc metalloprotease FtsH, found in Rickettsia felis (strain ATCC VR-1525 / URRWXCal2) (Rickettsia azadi).